Reading from the N-terminus, the 422-residue chain is Protein IQ-DOMAIN 5 (422 aa).

A Nuclear localization signal motif is present at residues 23–30 (SKKDENVK). IQ domains are found at residues 87 to 115 (ENRA…GLVR), 116 to 138 (LQAL…CMQA), and 139 to 164 (LVRV…TSQQ). Positions 137–151 (QALVRVQARVRARRV) are calmodulin-binding. The disordered stretch occupies residues 269 to 422 (GENGMEQSEN…NSDPIKQRLA (154 aa)). Residues 273–308 (MEQSENVPKTQIKSVSKMPNTSNLVSGVSSQMTGPC) are compositionally biased toward polar residues. A compositionally biased stretch (low complexity) spans 310–327 (SDGDSSSPGISSSIPVVS). Basic and acidic residues predominate over residues 355 to 371 (NPKERSREPNRSSKERL). The span at 373–387 (LPNSGKSLGSQSTKA) shows a compositional bias: polar residues. The segment covering 412–422 (RNSDPIKQRLA) has biased composition (basic and acidic residues).

The protein belongs to the IQD family. As to quaternary structure, binds to multiple calmodulin (CaM) in the presence of Ca(2+) and CaM-like proteins. In terms of tissue distribution, expressed mostly in vegetative tissues including older parts of the root, cotyledons, leaves and shoot apical meristems (SAM). Present at low levels in pollen, siliques and seeds.

The protein resides in the nucleus. It localises to the cytoplasm. It is found in the cytoskeleton. The protein localises to the spindle. Its subcellular location is the phragmoplast. Its function is as follows. May be involved in cooperative interactions with calmodulins or calmodulin-like proteins. Recruits calmodulin (CaM) calcium sensor proteins to cortical microtubule arrays, thus being a potential scaffold in cellular signaling and trafficking. Binds to microtubules (MTs) and promotes MT assembly and dynamics to modulate pavement cell (PC) morphogenesis via cellulose deposition-dependent anisotropic cell expansion triggered by cellulose synthase complexes (CSCs). May associate with nucleic acids and regulate gene expression at the transcriptional or post-transcriptional level. This Arabidopsis thaliana (Mouse-ear cress) protein is Protein IQ-DOMAIN 5.